The primary structure comprises 533 residues: MAAWSRTRLRWTLLDPRVVGRGLCPQGARAKATIPAALQAQESTEGPGTGQDRPRLRSPAELPGTGTLQFLFQLFLQGYVLHLPDLQVLNKTKYGPMWTTSFGTYTNVNLASAPLLEQVMRQEGKYPIRDHMDQWKDHRDHKGLTYGIFIAQGEQWYHLRQALKQRLLKPDEAALYTDALNEVISDFITRLDQVRAESESGDQVPDMAHLLYHLALEAITYILFEKRIGCLKPSIPEDTAAFIRSVAIMFQNSVYITFLPKWTRPLLPFWKRYLNGWDNIFSFGKKLIDEKVQELKAQLQETGPDGVRVSGYLHFLLTNELLSTQETIGTFPELLLAGVDTTSNTLTWALYHLSKSPEIQEALHKEVTGVVPFGKVPQHKDFAHMPLLKAVIKETLRLYPVVPTNSRIITEKETEINGFLFPKNTQFVLCHYVVSRDPSVFPEPNSFQPHRWLRKKEADNPGILHPFGSVPFGYGVRSCLGRRIAELEMQLMLSRLVQKYEIALAPGMGEVKTVSRIVLVPSKKVRLHFLQRQ.

A mitochondrion-targeting transit peptide spans methionine 1 to alanine 32. The tract at residues isoleucine 34–alanine 60 is disordered. 5 positions are modified to N6-acetyllysine: lysine 142, lysine 232, lysine 285, lysine 296, and lysine 375. Residues proline 386 to proline 400 are sterol-binding. Cysteine 479 lines the heme pocket. N6-acetyllysine occurs at positions 512 and 523.

This sequence belongs to the cytochrome P450 family. As to quaternary structure, interacts with HSP70; this interaction is required for initial targeting to mitochondria. Heme serves as cofactor. Post-translationally, acetylation of Lys-125 and Lys-285 is observed in liver mitochondria from fasted mice but not from fed mice. In terms of tissue distribution, expressed in the gray and white matter of cerebellum (at protein level).

The protein resides in the mitochondrion inner membrane. It carries out the reaction 5beta-cholestane-3alpha,7alpha,12alpha-triol + 6 reduced [adrenodoxin] + 3 O2 + 5 H(+) = (25R)-3alpha,7alpha,12alpha-trihydroxy-5beta-cholestan-26-oate + 6 oxidized [adrenodoxin] + 4 H2O. The enzyme catalyses cholestanol + 2 reduced [adrenodoxin] + O2 + 2 H(+) = (25R)-26-hydroxycholestanol + 2 oxidized [adrenodoxin] + H2O. The catalysed reaction is (25R)-3beta-hydroxycholest-5-en-7-one-26-al + 2 reduced [adrenodoxin] + O2 + H(+) = (25R)-3beta-hydroxycholest-5-en-7-one-26-oate + 2 oxidized [adrenodoxin] + H2O. It catalyses the reaction (25R)-3beta,26-dihydroxycholest-5-en-7-one + 2 reduced [adrenodoxin] + O2 + 2 H(+) = (25R)-3beta-hydroxycholest-5-en-7-one-26-al + 2 oxidized [adrenodoxin] + 2 H2O. It carries out the reaction 7-oxocholesterol + 2 reduced [adrenodoxin] + O2 + 2 H(+) = (25R)-3beta,26-dihydroxycholest-5-en-7-one + 2 oxidized [adrenodoxin] + H2O. The enzyme catalyses calciol + 2 reduced [adrenodoxin] + O2 + 2 H(+) = calcidiol + 2 oxidized [adrenodoxin] + H2O. The catalysed reaction is (25R)-5beta-cholestane-3alpha,7alpha,12alpha,26-tetrol + 2 reduced [adrenodoxin] + O2 + 2 H(+) = (25R)-3alpha,7alpha,12alpha-trihydroxy-5beta-cholestan-26-al + 2 oxidized [adrenodoxin] + 2 H2O. It catalyses the reaction 2 reduced [adrenodoxin] + cholesterol + O2 + 2 H(+) = (25R)-cholest-5-ene-3beta,26-diol + 2 oxidized [adrenodoxin] + H2O. It carries out the reaction (25R)-3beta,4beta-dihydroxycholest-5-en-26-al + 2 reduced [adrenodoxin] + O2 + H(+) = (25R)-3beta,4beta-dihydroxycholest-5-en-26-oate + 2 oxidized [adrenodoxin] + H2O. The enzyme catalyses (25R)-4beta,26-dihydroxycholesterol + 2 reduced [adrenodoxin] + O2 + 2 H(+) = (25R)-3beta,4beta-dihydroxycholest-5-en-26-al + 2 oxidized [adrenodoxin] + 2 H2O. The catalysed reaction is 4beta-hydroxycholesterol + 2 reduced [adrenodoxin] + O2 + 2 H(+) = (25R)-4beta,26-dihydroxycholesterol + 2 oxidized [adrenodoxin] + H2O. It catalyses the reaction (25R)-3beta-hydroxy-5-cholesten-26-al + 2 reduced [adrenodoxin] + O2 + H(+) = (25R)-3beta-hydroxy-5-cholestenoate + 2 oxidized [adrenodoxin] + H2O. It carries out the reaction (25R)-cholest-5-ene-3beta,26-diol + 2 reduced [adrenodoxin] + O2 + 2 H(+) = (25R)-3beta-hydroxy-5-cholesten-26-al + 2 oxidized [adrenodoxin] + 2 H2O. The enzyme catalyses (25R)-3alpha,7alpha,12alpha-trihydroxy-5beta-cholestan-26-al + 2 reduced [adrenodoxin] + O2 + H(+) = (25R)-3alpha,7alpha,12alpha-trihydroxy-5beta-cholestan-26-oate + 2 oxidized [adrenodoxin] + H2O. The catalysed reaction is 5beta-cholestane-3alpha,7alpha,12alpha-triol + 2 reduced [adrenodoxin] + O2 + 2 H(+) = (25R)-5beta-cholestane-3alpha,7alpha,12alpha,26-tetrol + 2 oxidized [adrenodoxin] + H2O. It participates in hormone biosynthesis; cholecalciferol biosynthesis. It functions in the pathway steroid metabolism; cholesterol degradation. Its pathway is lipid metabolism; bile acid biosynthesis. In terms of biological role, cytochrome P450 monooxygenase that catalyzes regio- and stereospecific hydroxylation of cholesterol and its derivatives. Hydroxylates (with R stereochemistry) the terminal methyl group of cholesterol side-chain in a three step reaction to yield at first a C26 alcohol, then a C26 aldehyde and finally a C26 acid. Regulates cholesterol homeostasis by catalyzing the conversion of excess cholesterol to bile acids via both the 'neutral' (classic) and the 'acid' (alternative) pathways. May also regulate cholesterol homeostasis via generation of active oxysterols, which act as ligands for NR1H2 and NR1H3 nuclear receptors, modulating the transcription of genes involved in lipid metabolism. Plays a role in cholestanol metabolism in the cerebellum. Similarly to cholesterol, hydroxylates cholestanol and may facilitate sterol diffusion through the blood-brain barrier to the systemic circulation for further degradation. Also hydroxylates retinal 7-ketocholesterol, a noxious oxysterol with pro-inflammatory and pro-apoptotic effects, and may play a role in its elimination from the retinal pigment epithelium. May play a redundant role in vitamin D biosynthesis. Catalyzes 25-hydroxylation of vitamin D3 that is required for its conversion to a functionally active form. The polypeptide is Sterol 26-hydroxylase, mitochondrial (Mus musculus (Mouse)).